The primary structure comprises 212 residues: Transcription antitermination protein NusB (212 aa).

Disordered regions lie at residues 1 to 34 (MSDE…SKSN) and 169 to 212 (EHDR…QAAG). Positions 178–212 (APAQPAAKADTATDAVADAATDAAAADDAADQAAG) are enriched in low complexity.

Belongs to the NusB family.

Involved in transcription antitermination. Required for transcription of ribosomal RNA (rRNA) genes. Binds specifically to the boxA antiterminator sequence of the ribosomal RNA (rrn) operons. This Delftia acidovorans (strain DSM 14801 / SPH-1) protein is Transcription antitermination protein NusB.